The following is a 163-amino-acid chain: 3-isopropylmalate dehydratase small subunit (163 aa).

The protein belongs to the LeuD family. LeuD type 2 subfamily. As to quaternary structure, heterodimer of LeuC and LeuD.

The enzyme catalyses (2R,3S)-3-isopropylmalate = (2S)-2-isopropylmalate. It participates in amino-acid biosynthesis; L-leucine biosynthesis; L-leucine from 3-methyl-2-oxobutanoate: step 2/4. In terms of biological role, catalyzes the isomerization between 2-isopropylmalate and 3-isopropylmalate, via the formation of 2-isopropylmaleate. The protein is 3-isopropylmalate dehydratase small subunit of Thermococcus kodakarensis (strain ATCC BAA-918 / JCM 12380 / KOD1) (Pyrococcus kodakaraensis (strain KOD1)).